Reading from the N-terminus, the 325-residue chain is Malate dehydrogenase (325 aa).

NADP(+) is bound at residue 7 to 13 (GSTGRVG). Residues Arg84 and Arg90 each coordinate substrate. NADP(+) contacts are provided by residues Asn97 and 120-122 (VTN). Residues Asn122 and Arg153 each coordinate substrate. The active-site Proton acceptor is His177.

It belongs to the LDH/MDH superfamily.

The enzyme catalyses (S)-malate + NADP(+) = oxaloacetate + NADPH + H(+). It catalyses the reaction (S)-malate + NAD(+) = oxaloacetate + NADH + H(+). In terms of biological role, catalyzes the reversible oxidation of malate to oxaloacetate. Can use NAD(+) and NADP(+) with similar specific activity. In Methanothermobacter marburgensis (strain ATCC BAA-927 / DSM 2133 / JCM 14651 / NBRC 100331 / OCM 82 / Marburg) (Methanobacterium thermoautotrophicum), this protein is Malate dehydrogenase.